Here is a 155-residue protein sequence, read N- to C-terminus: Ribonuclease H (155 aa).

In terms of domain architecture, RNase H type-1 spans 9 to 150 (DGQQVEMWTD…ADALANQGME (142 aa)). Positions 18, 56, 78, and 142 each coordinate Mg(2+).

This sequence belongs to the RNase H family. Monomer. It depends on Mg(2+) as a cofactor.

The protein resides in the cytoplasm. The catalysed reaction is Endonucleolytic cleavage to 5'-phosphomonoester.. Functionally, endonuclease that specifically degrades the RNA of RNA-DNA hybrids. This chain is Ribonuclease H, found in Bordetella pertussis (strain Tohama I / ATCC BAA-589 / NCTC 13251).